A 115-amino-acid chain; its full sequence is Ribonuclease P protein component (115 aa).

The protein belongs to the RnpA family. As to quaternary structure, consists of a catalytic RNA component (M1 or rnpB) and a protein subunit.

It carries out the reaction Endonucleolytic cleavage of RNA, removing 5'-extranucleotides from tRNA precursor.. Its function is as follows. RNaseP catalyzes the removal of the 5'-leader sequence from pre-tRNA to produce the mature 5'-terminus. It can also cleave other RNA substrates such as 4.5S RNA. The protein component plays an auxiliary but essential role in vivo by binding to the 5'-leader sequence and broadening the substrate specificity of the ribozyme. The sequence is that of Ribonuclease P protein component from Phytoplasma australiense.